The sequence spans 521 residues: Leucine-rich repeat-containing protein 24 (521 aa).

An N-terminal signal peptide occupies residues 1-23 (MALRAPTLLLLLLGLLLLPLLPG). Residues 24–58 (LPPRATGCPAACRCYSATVECGALRLRVVPPGIPP) form the LRRNT domain. LRR repeat units follow at residues 59–80 (GTQT…SLAP), 83–104 (ALRH…AFRA), 107–128 (RLLE…AFVG), 131–152 (QLRV…TFLH), 155–176 (RLQE…ALAG), and 179–200 (SLAL…ALQP). N-linked (GlcNAc...) asparagine glycosylation occurs at Asn-91. The region spanning 212–267 (NPWRCDCALHWLGSWIKEGGRRLLSSRDKKITCAEPPRLALQSLLEVSGGSLICIP) is the LRRCT domain. One can recognise an Ig-like C2-type domain in the interval 268–371 (PSVNVEPPEF…ARVPFHLLVN (104 aa)). An intrachain disulfide couples Cys-289 to Cys-353. The interval 306–330 (QPRDGKPQAQAQLEGGAPGLGGHGT) is disordered. N-linked (GlcNAc...) asparagine glycans are attached at residues Asn-342 and Asn-371. A disordered region spans residues 374–395 (RQQSQQLPDPQAPATRPVGHEP). The chain crosses the membrane as a helical span at residues 414-434 (AITAAIALLALTALLLAAMIC).

It is found in the membrane. The protein is Leucine-rich repeat-containing protein 24 (Lrrc24) of Mus musculus (Mouse).